We begin with the raw amino-acid sequence, 335 residues long: Aspartate--ammonia ligase (335 aa).

This sequence belongs to the class-II aminoacyl-tRNA synthetase family. AsnA subfamily.

Its subcellular location is the cytoplasm. It carries out the reaction L-aspartate + NH4(+) + ATP = L-asparagine + AMP + diphosphate + H(+). The protein operates within amino-acid biosynthesis; L-asparagine biosynthesis; L-asparagine from L-aspartate (ammonia route): step 1/1. This is Aspartate--ammonia ligase from Pediococcus pentosaceus (strain ATCC 25745 / CCUG 21536 / LMG 10740 / 183-1w).